A 458-amino-acid polypeptide reads, in one-letter code: N-acetylgalactosamine kinase (458 aa).

Positions 43, 49, 50, and 52 each coordinate alpha-D-galactose. ATP-binding residues include Gly143, Ser145, and Ser146. Asp190 provides a ligand contact to alpha-D-galactose. The Proton acceptor role is filled by Asp190. Positions 233 and 234 each coordinate ATP.

This sequence belongs to the GHMP kinase family. GalK subfamily. In terms of assembly, monomer.

The catalysed reaction is N-acetyl-alpha-D-galactosamine + ATP = N-acetyl-alpha-D-galactosamine 1-phosphate + ADP + H(+). Its function is as follows. Acts on GalNAc. Also acts as a galactokinase when galactose is present at high concentrations. The chain is N-acetylgalactosamine kinase (GALK2) from Pongo abelii (Sumatran orangutan).